Reading from the N-terminus, the 418-residue chain is Light-independent protochlorophyllide reductase subunit N (418 aa).

Residues cysteine 17, cysteine 42, and cysteine 103 each contribute to the [4Fe-4S] cluster site.

Belongs to the BchN/ChlN family. As to quaternary structure, protochlorophyllide reductase is composed of three subunits; ChlL, ChlN and ChlB. Forms a heterotetramer of two ChlB and two ChlN subunits. [4Fe-4S] cluster serves as cofactor.

The enzyme catalyses chlorophyllide a + oxidized 2[4Fe-4S]-[ferredoxin] + 2 ADP + 2 phosphate = protochlorophyllide a + reduced 2[4Fe-4S]-[ferredoxin] + 2 ATP + 2 H2O. Its pathway is porphyrin-containing compound metabolism; chlorophyll biosynthesis (light-independent). Functionally, component of the dark-operative protochlorophyllide reductase (DPOR) that uses Mg-ATP and reduced ferredoxin to reduce ring D of protochlorophyllide (Pchlide) to form chlorophyllide a (Chlide). This reaction is light-independent. The NB-protein (ChlN-ChlB) is the catalytic component of the complex. This is Light-independent protochlorophyllide reductase subunit N from Prochlorococcus marinus (strain MIT 9211).